We begin with the raw amino-acid sequence, 326 residues long: UDP-N-acetylglucosamine transporter (326 aa).

Helical transmembrane passes span asparagine 4 to methionine 24, leucine 38 to valine 58, leucine 136 to tryptophan 156, phenylalanine 174 to phenylalanine 194, leucine 212 to valine 232, leucine 244 to lysine 264, isoleucine 269 to tryptophan 289, and phenylalanine 293 to tyrosine 313.

Belongs to the nucleotide-sugar transporter family. SLC35A subfamily. Interacts with SLC35A2; the interaction is reduced in the presence of SLC35A4. Found in a complex with SLC35A2 and SLC35A4. Interacts with MGAT4B. O-Glcnacylation regulates the stability of SLC35A3 and the specific complex formation with MGAT4B.

The protein localises to the golgi apparatus membrane. The catalysed reaction is UMP(out) + UDP-N-acetyl-alpha-D-glucosamine(in) = UMP(in) + UDP-N-acetyl-alpha-D-glucosamine(out). Transports diphosphate-N-acetylglucosamine (UDP-GlcNAc) from the cytosol into the lumen of the Golgi apparatus, functioning as an antiporter that exchanges UDP-N-acetyl-alpha-D-glucosamine for UMP. May supply UDP-GlcNAc as substrate for Golgi-resident glycosyltransferases that generate highly branched, multiantennary complex N-glycans and keratan sulfate. However, the exact role of SLC35A3 still needs to be elucidated, it could be a member of a catalytically more efficient multiprotein complex rather than function independently as a single transporter. This Bos taurus (Bovine) protein is UDP-N-acetylglucosamine transporter (SLC35A3).